We begin with the raw amino-acid sequence, 466 residues long: tRNA-2-methylthio-N(6)-dimethylallyladenosine synthase (466 aa).

Residues 22-139 (RRYYVWTVGC…VVALAPNPIY (118 aa)) form the MTTase N-terminal domain. 6 residues coordinate [4Fe-4S] cluster: Cys31, Cys67, Cys101, Cys166, Cys170, and Cys173. Positions 152-386 (SHPPVSVHVP…EQLQEQIATE (235 aa)) constitute a Radical SAM core domain. The 61-residue stretch at 389 to 449 (ARFLGQTVEV…PWSLQGVPQL (61 aa)) folds into the TRAM domain.

It belongs to the methylthiotransferase family. MiaB subfamily. In terms of assembly, monomer. [4Fe-4S] cluster is required as a cofactor.

It localises to the cytoplasm. The enzyme catalyses N(6)-dimethylallyladenosine(37) in tRNA + (sulfur carrier)-SH + AH2 + 2 S-adenosyl-L-methionine = 2-methylsulfanyl-N(6)-dimethylallyladenosine(37) in tRNA + (sulfur carrier)-H + 5'-deoxyadenosine + L-methionine + A + S-adenosyl-L-homocysteine + 2 H(+). Its function is as follows. Catalyzes the methylthiolation of N6-(dimethylallyl)adenosine (i(6)A), leading to the formation of 2-methylthio-N6-(dimethylallyl)adenosine (ms(2)i(6)A) at position 37 in tRNAs that read codons beginning with uridine. The chain is tRNA-2-methylthio-N(6)-dimethylallyladenosine synthase from Chloroflexus aurantiacus (strain ATCC 29366 / DSM 635 / J-10-fl).